A 740-amino-acid polypeptide reads, in one-letter code: Death domain-associated protein 6 (740 aa).

Positions 1–55 (MATANSIIVLDDDDEDEAAAQPGPSHPLPNAASPGAEAPSSSEPHGARGSSSSGG) are disordered. The tract at residues 1–160 (MATANSIIVL…TSNEPSGNNP (160 aa)) is necessary for interaction with USP7 and ATRX. At serine 25 the chain carries Phosphoserine. The segment covering 29-55 (PNAASPGAEAPSSSEPHGARGSSSSGG) has biased composition (low complexity). Lysine 142 is covalently cross-linked (Glycyl lysine isopeptide (Lys-Gly) (interchain with G-Cter in SUMO2)). The tract at residues 147–185 (PAATTSNEPSGNNPPTHLSLDPTNAENTASQSPRTRGSR) is disordered. Residues 149–181 (ATTSNEPSGNNPPTHLSLDPTNAENTASQSPRT) show a composition bias toward polar residues. Phosphoserine is present on residues serine 178 and serine 213. 2 coiled-coil regions span residues 180–217 (RTRG…ELDD) and 358–399 (ARRL…ARLQ). Residues 183–417 (GSRRQIQRLE…TPEASLDSGE (235 aa)) form an interaction with histone H3.3 region. Positions 347–570 (GVDPALSDPV…SPVSQLFELE (224 aa)) are necessary for interaction with USP7. The tract at residues 384–724 (DKSEEGERKK…PRPGTCKTSV (341 aa)) is disordered. The Nuclear localization signal motif lies at 391–395 (RKKRR). Phosphoserine is present on residues serine 412 and serine 424. A coiled-coil region spans residues 430–489 (ASRAETDDEDDEESDEEEEEEEEEEEEEATDSEEEEDLEQMQEGQEDDEEEDEEEEAAAG). The span at 435–486 (TDDEDDEESDEEEEEEEEEEEEEATDSEEEEDLEQMQEGQEDDEEEDEEEEA) shows a compositional bias: acidic residues. Position 459 is a phosphothreonine (threonine 459). Phosphoserine is present on residues serine 495 and serine 498. Positions 496 to 505 (PMSSLQISNE) are enriched in polar residues. The segment at 501–625 (QISNEKNLEP…GVSPHNWGDS (125 aa)) is interaction with MAP3K5. Residue lysine 512 is modified to N6-acetyllysine. Polar residues predominate over residues 514-524 (ISRSSGEQQNK). The segment covering 529–542 (SPSLLSEEPLAPSS) has biased composition (low complexity). A compositionally biased stretch (acidic residues) spans 551–561 (QPEELTLEEES). A phosphoserine mark is found at serine 561 and serine 580. A compositionally biased stretch (polar residues) spans 578–590 (TPSSVETDISSSR). An interaction with SPOP region spans residues 626-740 (GPPCKKSRKE…EEIIVLSDSD (115 aa)). 2 (Microbial infection) Interaction with Puumala hantavirus nucleoprotein regions span residues 627 to 634 (PPCKKSRK) and 658 to 663 (KNGKKI). The short motif at 628-634 (PCKKSRK) is the Nuclear localization signal element. Residues lysine 630 and lysine 631 each participate in a glycyl lysine isopeptide (Lys-Gly) (interchain with G-Cter in SUMO1) cross-link. The span at 650–660 (ERQRSVHEKNG) shows a compositional bias: basic and acidic residues. Serine 668 and serine 671 each carry phosphoserine. Over residues 673 to 683 (LASLAPVADSS) the composition is skewed to low complexity. Phosphoserine is present on residues serine 688, serine 702, serine 737, and serine 739. Polar residues predominate over residues 693–711 (LVTSSLCIPSPARLSQTPH). The interval 733–740 (IIVLSDSD) is sumo interaction motif (SIM).

This sequence belongs to the DAXX family. Homomultimer. Interacts (via C-terminus) with TNFRSF6 (via death domain). Interacts with PAX5, SLC2A4/GLUT4, MAP3K5, TGFBR2, phosphorylated dimeric HSPB1/HSP27, CENPC, ETS1, sumoylated PML, UBE2I, MCRS1 and TP53. Interacts (via N-terminus) with HIPK2 and HIPK3. Interacts with HIPK1, which induces translocation from PML/POD/ND10 nuclear bodies to chromatin and enhances association with HDAC1. Interacts (non-phosphorylated) with PAX3, PAX7, DEK, HDAC1, HDAC2, HDAC3, acetylated histone H4 and histones H2A, H2B, H3, H3.3 and H4. Interacts with SPOP; mediating CUL3-dependent proteasomal degradation. Interacts with CBP; the interaction is dependent the sumoylation of CBP and suppresses CBP transcriptional activity via recruitment of HDAC2 directly in the complex with TP53 and HIPK2. Interacts with AXIN1; the interaction stimulates the interaction of DAXX with TP53, stimulates 'Ser-46' phosphorylation of TP53 on and induces cell death on UV irradiation. Interacts with MDM2; the interaction is direct. Interacts with USP7; the interaction is direct and independent of MDM2 and TP53. Part of a complex with DAXX, MDM2 and USP7 under non-stress conditions. Interacts (via N-terminus) with RASSF1 (via C-terminus); the interaction is independent of MDM2 and TP53; RASSF1 isoform A disrupts interactions among MDM2, DAXX and USP7, thus contributing to the efficient activation of TP53 by promoting MDM2 self-ubiquitination in cell-cycle checkpoint control in response to DNA damage. Interacts with ATRX to form the chromatin remodeling complex ATRX:DAXX. Interacts with HSF1 (via homotrimeric form preferentially); this interaction relieves homotrimeric HSF1 from repression of its transcriptional activity by HSP90-dependent multichaperone complex upon heat shock. Interacts with SUMO1P1/SUMO5. In terms of assembly, (Microbial infection) Interacts with human cytomegalovirus/HHV-5 tegument phosphoprotein pp71 and protein UL123. As to quaternary structure, (Microbial infection) Interacts with Epstein-Barr virus protein BNRF1. (Microbial infection) Interacts with human adenovirus 5 E1B-55K protein; this interaction might alterate the normal interactions of DAXX, PML, and TP53, which may contribute to cell transformation. In terms of assembly, (Microbial infection) Interacts with Puumala hantavirus nucleoprotein. Post-translationally, sumoylated with SUMO1 on multiple lysine residues. In terms of processing, phosphorylated by HIPK1 upon glucose deprivation. Polyubiquitinated; which is promoted by CUL3 and SPOP and results in proteasomal degradation. Ubiquitinated by MDM2; inducing its degradation. Deubiquitinated by USP7; leading to stabilize it. In terms of tissue distribution, ubiquitous.

It is found in the cytoplasm. Its subcellular location is the nucleus. It localises to the nucleoplasm. The protein localises to the PML body. The protein resides in the nucleolus. It is found in the chromosome. Its subcellular location is the centromere. Transcription corepressor known to repress transcriptional potential of several sumoylated transcription factors. Down-regulates basal and activated transcription. Its transcription repressor activity is modulated by recruiting it to subnuclear compartments like the nucleolus or PML/POD/ND10 nuclear bodies through interactions with MCSR1 and PML, respectively. Seems to regulate transcription in PML/POD/ND10 nuclear bodies together with PML and may influence TNFRSF6-dependent apoptosis thereby. Inhibits transcriptional activation of PAX3 and ETS1 through direct protein-protein interactions. Modulates PAX5 activity; the function seems to involve CREBBP. Acts as an adapter protein in a MDM2-DAXX-USP7 complex by regulating the RING-finger E3 ligase MDM2 ubiquitination activity. Under non-stress condition, in association with the deubiquitinating USP7, prevents MDM2 self-ubiquitination and enhances the intrinsic E3 ligase activity of MDM2 towards TP53, thereby promoting TP53 ubiquitination and subsequent proteasomal degradation. Upon DNA damage, its association with MDM2 and USP7 is disrupted, resulting in increased MDM2 autoubiquitination and consequently, MDM2 degradation, which leads to TP53 stabilization. Acts as a histone chaperone that facilitates deposition of histone H3.3. Acts as a targeting component of the chromatin remodeling complex ATRX:DAXX which has ATP-dependent DNA translocase activity and catalyzes the replication-independent deposition of histone H3.3 in pericentric DNA repeats outside S-phase and telomeres, and the in vitro remodeling of H3.3-containing nucleosomes. Does not affect the ATPase activity of ATRX but alleviates its transcription repression activity. Upon neuronal activation associates with regulatory elements of selected immediate early genes where it promotes deposition of histone H3.3 which may be linked to transcriptional induction of these genes. Required for the recruitment of histone H3.3:H4 dimers to PML-nuclear bodies (PML-NBs); the process is independent of ATRX and facilitated by ASF1A; PML-NBs are suggested to function as regulatory sites for the incorporation of newly synthesized histone H3.3 into chromatin. In case of overexpression of centromeric histone variant CENPA (as found in various tumors) is involved in its mislocalization to chromosomes; the ectopic localization involves a heterotypic tetramer containing CENPA, and histones H3.3 and H4 and decreases binding of CTCF to chromatin. Proposed to mediate activation of the JNK pathway and apoptosis via MAP3K5 in response to signaling from TNFRSF6 and TGFBR2. Interaction with HSPB1/HSP27 may prevent interaction with TNFRSF6 and MAP3K5 and block DAXX-mediated apoptosis. In contrast, in lymphoid cells JNC activation and TNFRSF6-mediated apoptosis may not involve DAXX. Shows restriction activity towards human cytomegalovirus (HCMV). Plays a role as a positive regulator of the heat shock transcription factor HSF1 activity during the stress protein response. The sequence is that of Death domain-associated protein 6 (DAXX) from Homo sapiens (Human).